A 278-amino-acid polypeptide reads, in one-letter code: Neuronal membrane glycoprotein M6-a (278 aa).

Residue Met1 is modified to N-acetylmethionine. The Cytoplasmic portion of the chain corresponds to 1–22 (MEENMEEGQTQKGCFECCIKCL). A helical transmembrane segment spans residues 23–43 (GGIPYASLIATILLYAGVALF). The Extracellular segment spans residues 44-84 (CGCGHEALSGTVNILQTYFELARTAGDTLDVFTMIDIFKYV). Residues 85-105 (IYGIAAAFFVYGILLMVEGFF) traverse the membrane as a helical segment. Topologically, residues 106-127 (TTGAIKDLYGDFKITTCGRCVS) are cytoplasmic. The helical transmembrane segment at 128 to 148 (AWFIMLTYLFMLAWLGVTAFT) threads the bilayer. At 149-213 (SLPVYMYFNV…STELNMTFHL (65 aa)) the chain is on the extracellular side. The N-linked (GlcNAc...) asparagine glycan is linked to Asn164. A disulfide bond links Cys174 and Cys192. The N-linked (GlcNAc...) asparagine glycan is linked to Asn208. A helical membrane pass occupies residues 214 to 234 (FIVALAGAGAAVIAMVHYLMV). At 235–278 (LSANWAYVKDACRMQKYEDIKSKEEQELHDIHSTRSKERLNAYT) the chain is on the cytoplasmic side. Residue Ser256 is modified to Phosphoserine. A Phosphothreonine modification is found at Thr278.

The protein belongs to the myelin proteolipid protein family. As to quaternary structure, interacts with OPRM1. Interacts with palmitoyltransferase ZDHHC17/HIP14; the interaction leads to palmitoylation of GPM6A. In terms of processing, N-glycosylated. Palmitoylated by ZDHHC17/HIP14. In terms of tissue distribution, widely expressed in the CNS. Found especially in the granule cell layer of the cerebellum but not in the molecular layer or white matter. Expressed in the immature embryonic retina including the nerve fiber layer (NFL), inner plexiform layer (IPL), and outer plexiform layer (OPL). Weakly expressed in processes of Mueller glia cells.

It is found in the cell membrane. Its subcellular location is the cell projection. The protein resides in the axon. It localises to the growth cone. The protein localises to the dendritic spine. It is found in the filopodium. Its subcellular location is the neuron projection. Its function is as follows. Involved in neuronal differentiation, including differentiation and migration of neuronal stem cells. Plays a role in neuronal plasticity and is involved in neurite and filopodia outgrowth, filopodia motility and probably synapse formation. Gpm6a-induced filopodia formation involves mitogen-activated protein kinase (MAPK) and Src signaling pathways. Conflictingly, PubMed:22162747 reports that induced cellular protrusions are simple membrane-wrapped tubules without actin or tubulin-based cytoskeletons and with Gpm6a gliding along membrane edges indicative for a function in actin-independent membrane deformation. May be involved in neuronal NGF-dependent Ca(2+) influx. May be involved in regulation of endocytosis and intracellular trafficking of G-protein-coupled receptors (GPCRs); enhances internalization and recycling of mu-type opioid receptor. This chain is Neuronal membrane glycoprotein M6-a (Gpm6a), found in Mus musculus (Mouse).